The following is a 325-amino-acid chain: Glutarate 2-hydroxylase (325 aa).

Residues H160, D162, and H292 each contribute to the Fe cation site.

Belongs to the glutarate hydroxylase family. As to quaternary structure, homotetramer. Requires Fe(2+) as cofactor.

The enzyme catalyses glutarate + 2-oxoglutarate + O2 = (S)-2-hydroxyglutarate + succinate + CO2. It participates in amino-acid degradation. Acts as an alpha-ketoglutarate-dependent dioxygenase catalyzing hydroxylation of glutarate (GA) to L-2-hydroxyglutarate (L2HG). Functions in a L-lysine degradation pathway that proceeds via cadaverine, glutarate and L-2-hydroxyglutarate. The polypeptide is Glutarate 2-hydroxylase (Pseudomonas putida (strain GB-1)).